The primary structure comprises 296 residues: Fructose-bisphosphate aldolase class 1 (296 aa).

The active-site Proton acceptor is the Glu-175. Lys-212 (schiff-base intermediate with dihydroxyacetone-P) is an active-site residue.

This sequence belongs to the class I fructose-bisphosphate aldolase family.

It catalyses the reaction beta-D-fructose 1,6-bisphosphate = D-glyceraldehyde 3-phosphate + dihydroxyacetone phosphate. It functions in the pathway carbohydrate degradation; glycolysis; D-glyceraldehyde 3-phosphate and glycerone phosphate from D-glucose: step 4/4. The polypeptide is Fructose-bisphosphate aldolase class 1 (Staphylococcus aureus (strain USA300)).